A 483-amino-acid polypeptide reads, in one-letter code: MAADEVAGGARKATKSKLFEFLVHGVRPGMPSGARMPHQGAPMGPPGSPYMGSPAVRPGLAPAGMEPARKRAAPPPGQSQAQSQGQPVPTAPARSRSAKRRKMADKILPQRIRELVPESQAYMDLLAFERKLDQTIMRKRVDIQEALKRPMKQKRKLRLYISNTFNPAKPDAEDSDGSIASWELRVEGKLLDDPSKQKRKFSSFFKSLVIELDKDLYGPDNHLVEWHRTPTTQETDGFQVKRPGDLSVRCTLLLMLDYQPPQFKLDPRLARLLGLHTQSRSAIVQALWQYVKTNRLQDSHDKEYINGDKYFQQIFDCPRLKFSEIPQRLTALLLPPDPIVINHVISVDPSDQKKTACYDIDVEVEEPLKGQMSSFLLSTANQQEISALDSKIHETIESINQLKIQRDFMLSFSRDPKGYVQDLLRSQSRDLKVMTDVAGNPEEERRAEFYHQPWSQEAVSRYFYCKIQQRRQELEQSLVVRNT.

N-acetylalanine is present on A2. The interval 26 to 102 (VRPGMPSGAR…ARSRSAKRRK (77 aa)) is disordered. The span at 78-87 (QSQAQSQGQP) shows a compositional bias: low complexity. S178 carries the phosphoserine modification. An SWIB/MDM2 domain is found at 258 to 335 (YQPPQFKLDP…PQRLTALLLP (78 aa)).

This sequence belongs to the SMARCD family. In terms of assembly, component of the multiprotein chromatin-remodeling complexes SWI/SNF: SWI/SNF-A (BAF), SWI/SNF-B (PBAF) and related complexes. The canonical complex contains a catalytic subunit (either SMARCA4/BRG1/BAF190A or SMARCA2/BRM/BAF190B) and at least SMARCE1, ACTL6A/BAF53, SMARCC1/BAF155, SMARCC2/BAF170, and SMARCB1/SNF5/BAF47. Other subunits specific to each of the complexes may also be present permitting several possible combinations developmentally and tissue specific. Component of the BAF complex, which includes at least actin (ACTB), ARID1A/BAF250A, ARID1B/BAF250B, SMARCA2/BRM, SMARCA4/BRG1/BAF190A, ACTL6A/BAF53, ACTL6B/BAF53B, SMARCE1/BAF57, SMARCC1/BAF155, SMARCC2/BAF170, SMARCB1/SNF5/INI1, and one or more SMARCD1/BAF60A, SMARCD2/BAF60B, or SMARCD3/BAF60C. In muscle cells, the BAF complex also contains DPF3. Component of neural progenitors-specific chromatin remodeling complex (npBAF complex) composed of at least, ARID1A/BAF250A or ARID1B/BAF250B, SMARCD1/BAF60A, SMARCD3/BAF60C, SMARCA2/BRM/BAF190B, SMARCA4/BRG1/BAF190A, SMARCB1/BAF47, SMARCC1/BAF155, SMARCE1/BAF57, SMARCC2/BAF170, PHF10/BAF45A, ACTL6A/BAF53A and actin. Component of neuron-specific chromatin remodeling complex (nBAF complex) composed of at least, ARID1A/BAF250A or ARID1B/BAF250B, SMARCD1/BAF60A, SMARCD3/BAF60C, SMARCA2/BRM/BAF190B, SMARCA4/BRG1/BAF190A, SMARCB1/BAF47, SMARCC1/BAF155, SMARCE1/BAF57, SMARCC2/BAF170, DPF1/BAF45B, DPF3/BAF45C, ACTL6B/BAF53B and actin. May be a component of the SWI/SNF-B (PBAF) chromatin remodeling complex, at least composed of SMARCA4/BRG1, SMARCB1/BAF47/SNF5, ACTL6A/BAF53A or ACTL6B/BAF53B, SMARCE1/BAF57, SMARCD1/BAF60A, SMARCD2/BAF60B, perhaps SMARCD3/BAF60C, SMARCC1/BAF155, SMARCC2/BAF170, PBRM1/BAF180, ARID2/BAF200 and actin. Interacts with SMARCA4/BRG1/BAF190A. Component of SWI/SNF (GBAF) subcomplex, which includes at least BICRA or BICRAL (mutually exclusive), BRD9, SS18, SMARCA2/BRM, SMARCA4/BRG1/BAF190A, ACTL6A/BAF53, SMARCC1/BAF155, and SMARCD1/BAF60A. The precise distribution of the related SMARCD1, SMARCD2 and SMARCD3 proteins among these and other SWI/SNF nucleosome-remodeling complexes is not fully known. May allow recruitment of SWI/SNF containing complexes specifically to promoters where these factors are located. Also interacts with several nuclear receptors including PPARG/NR1C3, RXRA/NR1F1, ESR1, NR5A1, NR5A2/LRH1 and other transcriptional activators including the HLH protein SREBF1/SREBP1 and the homeobox protein PBX1. Interacts with PRDM1/BLIMP1. In terms of tissue distribution, isoform 2 and isoform 1 are expressed in brain, heart, kidney, placenta, prostate, salivary gland, spleen, testis, thyroid, trachea and uterus. Isoform 1 is also expressed in skeletal muscle and adipose tissue.

Its subcellular location is the nucleus. Involved in transcriptional activation and repression of select genes by chromatin remodeling (alteration of DNA-nucleosome topology). Component of SWI/SNF chromatin remodeling complexes that carry out key enzymatic activities, changing chromatin structure by altering DNA-histone contacts within a nucleosome in an ATP-dependent manner. Stimulates nuclear receptor mediated transcription. Belongs to the neural progenitors-specific chromatin remodeling complex (npBAF complex) and the neuron-specific chromatin remodeling complex (nBAF complex). During neural development a switch from a stem/progenitor to a postmitotic chromatin remodeling mechanism occurs as neurons exit the cell cycle and become committed to their adult state. The transition from proliferating neural stem/progenitor cells to postmitotic neurons requires a switch in subunit composition of the npBAF and nBAF complexes. As neural progenitors exit mitosis and differentiate into neurons, npBAF complexes which contain ACTL6A/BAF53A and PHF10/BAF45A, are exchanged for homologous alternative ACTL6B/BAF53B and DPF1/BAF45B or DPF3/BAF45C subunits in neuron-specific complexes (nBAF). The npBAF complex is essential for the self-renewal/proliferative capacity of the multipotent neural stem cells. The nBAF complex along with CREST plays a role regulating the activity of genes essential for dendrite growth. The protein is SWI/SNF-related matrix-associated actin-dependent regulator of chromatin subfamily D member 3 (SMARCD3) of Homo sapiens (Human).